Consider the following 156-residue polypeptide: Small ribosomal subunit protein uS7 (156 aa).

This sequence belongs to the universal ribosomal protein uS7 family. In terms of assembly, part of the 30S ribosomal subunit. Contacts proteins S9 and S11.

Functionally, one of the primary rRNA binding proteins, it binds directly to 16S rRNA where it nucleates assembly of the head domain of the 30S subunit. Is located at the subunit interface close to the decoding center, probably blocks exit of the E-site tRNA. The polypeptide is Small ribosomal subunit protein uS7 (Solibacter usitatus (strain Ellin6076)).